A 383-amino-acid chain; its full sequence is BRISC and BRCA1-A complex member 2 (383 aa).

Met-1 is subject to N-acetylmethionine. Ser-2 is modified (phosphoserine). UEV-like regions lie at residues 30 to 147 and 275 to 364; these read DATN…TLLE and IAAF…RAKA.

It belongs to the BABAM2 family. As to quaternary structure, component of the ARISC complex, at least composed of UIMC1/RAP80, ABRAXAS1, BRCC3/BRCC36, BABAM2 and BABAM1/NBA1. Component of the BRCA1-A complex, at least composed of BRCA1, BARD1, UIMC1/RAP80, ABRAXAS1, BRCC3/BRCC36, BABAM2 and BABAM1/NBA1. In the BRCA1-A complex, interacts directly with ABRAXAS1, BRCC3/BRCC36 and BABAM1/NBA1. Binds polyubiquitin. Component of the BRISC complex, at least composed of ABRAXAS2, BRCC3/BRCC36, BABAM2 and BABAM1/NBA1. Identified in a complex with SHMT2 and the other subunits of the BRISC complex. Component of the BRCA1/BRCA2 containing complex (BRCC), which also contains BRCA1, BRCA2, BARD1, BRCC3/BRCC36 and RAD51. BRCC is a ubiquitin E3 ligase complex that enhances cellular survival following DNA damage. May interact with FAS and TNFRSF1A.

The protein resides in the cytoplasm. Its subcellular location is the nucleus. Component of the BRCA1-A complex, a complex that specifically recognizes 'Lys-63'-linked ubiquitinated histones H2A and H2AX at DNA lesions sites, leading to target the BRCA1-BARD1 heterodimer to sites of DNA damage at double-strand breaks (DSBs). The BRCA1-A complex also possesses deubiquitinase activity that specifically removes 'Lys-63'-linked ubiquitin on histones H2A and H2AX. In the BRCA1-A complex, it acts as an adapter that bridges the interaction between BABAM1/NBA1 and the rest of the complex, thereby being required for the complex integrity and modulating the E3 ubiquitin ligase activity of the BRCA1-BARD1 heterodimer. Component of the BRISC complex, a multiprotein complex that specifically cleaves 'Lys-63'-linked ubiquitin in various substrates. Within the BRISC complex, acts as an adapter that bridges the interaction between BABAM1/NBA1 and the rest of the complex, thereby being required for the complex integrity. The BRISC complex is required for normal mitotic spindle assembly and microtubule attachment to kinetochores via its role in deubiquitinating NUMA1. The BRISC complex plays a role in interferon signaling via its role in the deubiquitination of the interferon receptor IFNAR1; deubiquitination increases IFNAR1 activity by enhancing its stability and cell surface expression. Down-regulates the response to bacterial lipopolysaccharide (LPS) via its role in IFNAR1 deubiquitination. May play a role in homeostasis or cellular differentiation in cells of neural, epithelial and germline origins. May also act as a death receptor-associated anti-apoptotic protein, which inhibits the mitochondrial apoptotic pathway. May regulate TNF-alpha signaling through its interactions with TNFRSF1A; however these effects may be indirect. This Bos taurus (Bovine) protein is BRISC and BRCA1-A complex member 2 (BABAM2).